The following is a 387-amino-acid chain: Involucrin (387 aa).

2 disordered regions span residues M1 to G319 and V347 to E387. Residues N28–P37 are compositionally biased toward polar residues. The span at Q62–Q71 shows a compositional bias: low complexity. Basic and acidic residues-rich tracts occupy residues K85–P96, Q104–E115, Q147–Q179, and Q231–L245.

The protein belongs to the involucrin family. Directly or indirectly cross-linked to cornifelin (CNFN). In terms of processing, substrate of transglutaminase. Specific glutamines or lysines are cross-linked to keratins, desmoplakin and to inter involucrin molecules. Keratinocytes of epidermis and other stratified squamous epithelia.

It is found in the cytoplasm. Its function is as follows. Part of the insoluble cornified cell envelope (CE) of stratified squamous epithelia. This Cephalopachus bancanus (Western tarsier) protein is Involucrin (IVL).